We begin with the raw amino-acid sequence, 699 residues long: Putative inactive kinesin-like protein KIN-7B (699 aa).

The 170-residue stretch at 1–170 folds into the Kinesin motor domain; that stretch reads MRAIQKKSLC…LLFGSCAKEV (170 aa). Positions 179–247 form a coiled coil; the sequence is VMSDKALVKH…QSRLQDLLQS (69 aa). The disordered stretch occupies residues 249-345; the sequence is GDHDLNRQVQ…VNSRHSRPSG (97 aa). A compositionally biased stretch (low complexity) spans 264–275; that stretch reads RSPPSVGMPPSV. Over residues 276–298 the composition is skewed to basic and acidic residues; the sequence is SRDDSSQVSHDDSDLYKEVRCIE. Polar residues predominate over residues 313–338; the sequence is GESSSPQDSNMNSGLHGNDSNASVNS.

It belongs to the TRAFAC class myosin-kinesin ATPase superfamily. Kinesin family. KIN-7 subfamily.

This Oryza sativa subsp. japonica (Rice) protein is Putative inactive kinesin-like protein KIN-7B.